The sequence spans 294 residues: dTDP-4-dehydrorhamnose reductase (294 aa).

Residues 11–13 (GQL), 38–39 (DI), and 62–64 (AYT) contribute to the NADH site. NADPH is bound by residues 12–13 (QL), 38–39 (DI), and 62–64 (AYT). 103-104 (TD) contributes to the dTDP-beta-L-rhamnose binding site. Residues Tyr127 and Lys131 each coordinate NADH. 2 residues coordinate NADPH: Tyr127 and Lys131. Catalysis depends on Tyr127, which acts as the Proton donor/acceptor. Residue Trp152 participates in dTDP-beta-L-rhamnose binding.

The protein belongs to the dTDP-4-dehydrorhamnose reductase family. In terms of assembly, homodimer. Mg(2+) serves as cofactor.

It carries out the reaction dTDP-beta-L-rhamnose + NADP(+) = dTDP-4-dehydro-beta-L-rhamnose + NADPH + H(+). The protein operates within carbohydrate biosynthesis; dTDP-L-rhamnose biosynthesis. It functions in the pathway bacterial outer membrane biogenesis; LPS O-antigen biosynthesis. In terms of biological role, involved in the biosynthesis of the dTDP-L-rhamnose which is an important component of lipopolysaccharide (LPS). Catalyzes the reduction of dTDP-6-deoxy-L-lyxo-4-hexulose to yield dTDP-L-rhamnose. This Aggregatibacter actinomycetemcomitans (Actinobacillus actinomycetemcomitans) protein is dTDP-4-dehydrorhamnose reductase.